A 128-amino-acid chain; its full sequence is Large ribosomal subunit protein bL12 (128 aa).

The protein belongs to the bacterial ribosomal protein bL12 family. Homodimer. Part of the ribosomal stalk of the 50S ribosomal subunit. Forms a multimeric L10(L12)X complex, where L10 forms an elongated spine to which 2 to 4 L12 dimers bind in a sequential fashion. Binds GTP-bound translation factors.

Forms part of the ribosomal stalk which helps the ribosome interact with GTP-bound translation factors. Is thus essential for accurate translation. The sequence is that of Large ribosomal subunit protein bL12 from Acidithiobacillus ferrooxidans (strain ATCC 23270 / DSM 14882 / CIP 104768 / NCIMB 8455) (Ferrobacillus ferrooxidans (strain ATCC 23270)).